The primary structure comprises 204 residues: Rho GDP-dissociation inhibitor 1 (204 aa).

The segment at 1–36 is disordered; sequence MAEQEPTAEQLAQIAAENEEDEHSVNYKPPAQKSIQ. At Ala-2 the chain carries N-acetylalanine. Ser-34 carries the post-translational modification Phosphoserine. Lys-43 carries the post-translational modification N6-acetyllysine. Position 47 is a phosphoserine (Ser-47). An N6-acetyllysine mark is found at Lys-105 and Lys-127. Residues Lys-138 and Lys-141 each participate in a glycyl lysine isopeptide (Lys-Gly) (interchain with G-Cter in SUMO1); alternate cross-link. Residues Lys-138 and Lys-141 each participate in a glycyl lysine isopeptide (Lys-Gly) (interchain with G-Cter in SUMO2); alternate cross-link. The residue at position 141 (Lys-141) is an N6-acetyllysine; alternate. Lys-141 bears the N6-succinyllysine; alternate mark. Lys-178 is subject to N6-acetyllysine.

Belongs to the Rho GDI family. As to quaternary structure, monomer. Interacts with FER. Interacts with PLXNB3. Forms a heterodimer with RAC1. Interacts with RHOA, the affinity is increased by three orders of magnitude when RHOA is prenylated. Interacts with PSMD10; the interaction increases ARHGDIA association with RHOA, leading to ARHGDIA-mediated inactivation of RHOA and ROCK and prolonged AKT activation. Interacts with KANK2; the interaction is direct and may regulate the interaction of ARHGDIA with RHOA, RAC1 and CDC42. Interacts with RHOC. Interacts with CDC42. Interacts with NGFR (via death domain); NGFR binding decreases the affinity for RHOA.

Its subcellular location is the cytoplasm. In terms of biological role, controls Rho proteins homeostasis. Regulates the GDP/GTP exchange reaction of the Rho proteins by inhibiting the dissociation of GDP from them, and the subsequent binding of GTP to them. Retains Rho proteins such as CDC42, RAC1 and RHOA in an inactive cytosolic pool, regulating their stability and protecting them from degradation. Actively involved in the recycling and distribution of activated Rho GTPases in the cell, mediates extraction from membranes of both inactive and activated molecules due its exceptionally high affinity for prenylated forms. Through the modulation of Rho proteins, may play a role in cell motility regulation. In glioma cells, inhibits cell migration and invasion by mediating the signals of SEMA5A and PLXNB3 that lead to inactivation of RAC1. The polypeptide is Rho GDP-dissociation inhibitor 1 (ARHGDIA) (Homo sapiens (Human)).